Reading from the N-terminus, the 414-residue chain is Histidine--tRNA ligase (414 aa).

This sequence belongs to the class-II aminoacyl-tRNA synthetase family. As to quaternary structure, homodimer.

Its subcellular location is the cytoplasm. It catalyses the reaction tRNA(His) + L-histidine + ATP = L-histidyl-tRNA(His) + AMP + diphosphate + H(+). This Pelobacter propionicus (strain DSM 2379 / NBRC 103807 / OttBd1) protein is Histidine--tRNA ligase.